The chain runs to 284 residues: Short chain dehydrogenase/reductase AacuD (284 aa).

V37 contacts NADP(+). Active-site proton donor residues include S166 and Y180. Y180, K184, and T215 together coordinate NADP(+). Catalysis depends on K184, which acts as the Lowers pKa of active site Tyr.

It belongs to the short-chain dehydrogenases/reductases (SDR) family.

It participates in secondary metabolite biosynthesis. Its function is as follows. Short chain dehydrogenase/reductase; part of the gene cluster that mediates the biosynthesis of the tetrahydroxanthone dimer secalonic acid D. The pathway begins with the synthesis of atrochrysone thioester by the polyketide synthase AacuL. The atrochrysone carboxyl ACP thioesterase AacuM then breaks the thioester bond and releases the atrochrysone carboxylic acid from AacuL. Atrochrysone carboxylic acid is decarboxylated by the decarboxylase AacuI, and oxidized by the anthrone oxygenase AacuG to yield emodin. Emodin is then reduced to emodin hydroquinone by a yet unidentified oxidoreductase. A-ring reduction by the short chain dehydrogenase AacuN, dehydration by the scytalone dehydratase-like protein AacuK and probable spontaneous re-oxidation, results in overall deoxygenation to chrysophanol. Baeyer-Villiger oxidation by the Baeyer-Villiger monooxygenase (BVMO) AacuH then yields monodictyphenone. Monodictyphenone is transformed into compounds with the tetrahydroxanthone skeleton via methylesterification by the methyltransferase AacuQ, followed by the action of the flavin-dependent monooxygenase AacuC, the isomerase AacuP, and the short chain dehydrogenase/reductase AacuF or AacuD. AacuF and AacuD should accept the same compound as a substrate but perform the ketoreduction with a different stereoselectivity, thus yielding blennolides B and A, respectively. In the final step of the biosynthesis, the cytochrome P450 monooxygenase AacuE accepts blennolide B and/or blennolide A to conduct the dimerization reaction to furnish the tetrahydroxanthone dimers, secalonic acids D, B, and F. This is Short chain dehydrogenase/reductase AacuD from Aspergillus aculeatus (strain ATCC 16872 / CBS 172.66 / WB 5094).